We begin with the raw amino-acid sequence, 495 residues long: PXA domain protein 1 (495 aa).

Residues 1–174 (MAKLSSLLNP…KFIIYLSKAI (174 aa)) enclose the PXA domain. 2 helical membrane-spanning segments follow: residues 7 to 27 (LLNPIISKILEIYVYSWYSGI) and 235 to 255 (WFFFYTLLYPWIALVSAFVAE). Composition is skewed to polar residues over residues 402-419 (AVSSPTKANTNKSHQRSF) and 427-436 (DSQTPSENSA). Positions 402-436 (AVSSPTKANTNKSHQRSFSIPKATKDSQTPSENSA) are disordered. A helical membrane pass occupies residues 446 to 466 (AYSQIPVIPFFLPSDKLIMLV).

Its subcellular location is the endosome membrane. Its function is as follows. Required for required for normal vacuolar morphology and for vacuolar protein transport. Also required for endosome-to-Golgi protein transport. The protein is PXA domain protein 1 (pxa1) of Schizosaccharomyces pombe (strain 972 / ATCC 24843) (Fission yeast).